We begin with the raw amino-acid sequence, 109 residues long: uncharacterized protein (109 aa).

It localises to the mitochondrion. This is an uncharacterized protein from Arabidopsis thaliana (Mouse-ear cress).